The chain runs to 250 residues: Small ribosomal subunit protein uS3 (250 aa).

In terms of domain architecture, KH type-2 spans 39–107 (VREFLTKNLK…PAQVSINEID (69 aa)). A disordered region spans residues 215 to 250 (MNPAPAEERPAKRGRGRGEGQERRGRRGDRAADKGE). Residues 220 to 250 (AEERPAKRGRGRGEGQERRGRRGDRAADKGE) show a composition bias toward basic and acidic residues.

Belongs to the universal ribosomal protein uS3 family. As to quaternary structure, part of the 30S ribosomal subunit. Forms a tight complex with proteins S10 and S14.

Its function is as follows. Binds the lower part of the 30S subunit head. Binds mRNA in the 70S ribosome, positioning it for translation. This is Small ribosomal subunit protein uS3 from Acinetobacter baumannii (strain AB0057).